Reading from the N-terminus, the 117-residue chain is uncharacterized protein (117 aa).

A run of 2 helical transmembrane segments spans residues 9-29 (ITSHDNFIAYIFFTFFTFIPF) and 56-76 (VIIVGPLAPFSSYSSPFFFIP).

It is found in the membrane. This is an uncharacterized protein from Saccharomyces cerevisiae (strain ATCC 204508 / S288c) (Baker's yeast).